We begin with the raw amino-acid sequence, 597 residues long: Elongation factor 4 (597 aa).

One can recognise a tr-type G domain in the interval Asn2–Lys184. Residues Asp14–Thr19 and Asn131–Asp134 contribute to the GTP site.

The protein belongs to the TRAFAC class translation factor GTPase superfamily. Classic translation factor GTPase family. LepA subfamily.

Its subcellular location is the cell inner membrane. The catalysed reaction is GTP + H2O = GDP + phosphate + H(+). Functionally, required for accurate and efficient protein synthesis under certain stress conditions. May act as a fidelity factor of the translation reaction, by catalyzing a one-codon backward translocation of tRNAs on improperly translocated ribosomes. Back-translocation proceeds from a post-translocation (POST) complex to a pre-translocation (PRE) complex, thus giving elongation factor G a second chance to translocate the tRNAs correctly. Binds to ribosomes in a GTP-dependent manner. This is Elongation factor 4 from Janthinobacterium sp. (strain Marseille) (Minibacterium massiliensis).